The following is a 614-amino-acid chain: Putative Na(+)/H(+) antiporter YjbQ (614 aa).

13 helical membrane-spanning segments follow: residues 3 to 23 (HTSV…PILL), 32 to 52 (VVVA…NLVV), 57 to 77 (WLQT…GLEI), 107 to 127 (IFVG…LAGF), 130 to 150 (NAFL…VPTL), 163 to 183 (IILL…AVFS), 193 to 213 (MWLL…GRVF), 225 to 244 (GTIQ…LVAL), 248 to 267 (LGAE…SLLS), 282 to 302 (GFLI…WTLF), 307 to 327 (ILIM…IPVM), 338 to 358 (IFAS…AATI), and 368 to 388 (NMSG…PICF). Positions 401-519 (KKTITFIGAN…EQGISIFSIL (119 aa)) constitute an RCK N-terminal domain. The region spanning 533–614 (PGVMKLLTNQ…VTDLKKTLEG (82 aa)) is the RCK C-terminal domain.

It belongs to the monovalent cation:proton antiporter 2 (CPA2) transporter (TC 2.A.37) family.

It is found in the cell membrane. With respect to regulation, binds cyclic di-AMP (c-di-AMP), which may regulate the transporter activity. Its function is as follows. Probable Na(+)/H(+) antiporter. The sequence is that of Putative Na(+)/H(+) antiporter YjbQ from Bacillus subtilis (strain 168).